Here is a 126-residue protein sequence, read N- to C-terminus: Probable DNA-directed RNA polymerase II subunit RPB11 (126 aa).

Belongs to the archaeal Rpo11/eukaryotic RPB11/RPC19 RNA polymerase subunit family. Component of the RNA polymerase II (Pol II) complex consisting of 12 subunits.

It is found in the nucleus. Its function is as follows. DNA-dependent RNA polymerase catalyzes the transcription of DNA into RNA using the four ribonucleoside triphosphates as substrates. Component of RNA polymerase II which synthesizes mRNA precursors and many functional non-coding RNAs. Pol II is the central component of the basal RNA polymerase II transcription machinery. It is composed of mobile elements that move relative to each other. RPB11 is part of the core element with the central large cleft. The polypeptide is Probable DNA-directed RNA polymerase II subunit RPB11 (Plasmodium chabaudi chabaudi).